Here is a 618-residue protein sequence, read N- to C-terminus: 1-deoxy-D-xylulose-5-phosphate synthase (618 aa).

Thiamine diphosphate-binding positions include H72 and 113-115; that span reads GHA. A Mg(2+)-binding site is contributed by D144. Thiamine diphosphate contacts are provided by residues 145–146, N173, H284, and E359; that span reads GA. Residue N173 participates in Mg(2+) binding.

It belongs to the transketolase family. DXPS subfamily. As to quaternary structure, homodimer. Mg(2+) is required as a cofactor. The cofactor is thiamine diphosphate.

The enzyme catalyses D-glyceraldehyde 3-phosphate + pyruvate + H(+) = 1-deoxy-D-xylulose 5-phosphate + CO2. It participates in metabolic intermediate biosynthesis; 1-deoxy-D-xylulose 5-phosphate biosynthesis; 1-deoxy-D-xylulose 5-phosphate from D-glyceraldehyde 3-phosphate and pyruvate: step 1/1. Functionally, catalyzes the acyloin condensation reaction between C atoms 2 and 3 of pyruvate and glyceraldehyde 3-phosphate to yield 1-deoxy-D-xylulose-5-phosphate (DXP). This chain is 1-deoxy-D-xylulose-5-phosphate synthase, found in Dictyoglomus turgidum (strain DSM 6724 / Z-1310).